The sequence spans 798 residues: Nuclear cap-binding protein subunit 1 (798 aa).

An MIF4G domain is found at 28–241; the sequence is EKKLQGVIGK…SLSAQIEALR (214 aa). Residues 663–686 form a disordered region; that stretch reads NKIKEEDDEESDIKMDEDETKEEK. Residues 668-682 are compositionally biased toward acidic residues; sequence EDDEESDIKMDEDET.

Belongs to the NCBP1 family. In terms of assembly, component of the nuclear cap-binding complex (CBC), a heterodimer composed of ncbp-1 and ncbp-1 that interacts with m7GpppG-capped RNA.

Its subcellular location is the nucleus. Component of the cap-binding complex (CBC), which binds cotranscriptionally to the 5'-cap of pre-mRNAs and is involved in various processes such as pre-mRNA splicing and RNA-mediated gene silencing (RNAi). The CBC complex is involved in miRNA-mediated RNA interference and is required for primary microRNAs (miRNAs) processing. In the CBC complex, ncbp-1 does not bind directly capped RNAs (m7GpppG-capped RNA) but is required to stabilize the movement of the N-terminal loop of ncbp-2 and lock the CBC into a high affinity cap-binding state with the cap structure. The sequence is that of Nuclear cap-binding protein subunit 1 (ncbp-1) from Caenorhabditis elegans.